The primary structure comprises 829 residues: Periplasmic nitrate reductase (829 aa).

Residues 1-29 (MKMTRRAFVKANAAASAAAVAGVTLPASA) constitute a signal peptide (tat-type signal). The region spanning 41–97 (IKWDKAPCRFCGTGCSVLVGTQNGRVVATQGDPEAPVNKGLNCIKGYFLSKIMYGKD) is the 4Fe-4S Mo/W bis-MGD-type domain. Positions 48, 51, 55, and 83 each coordinate [4Fe-4S] cluster. Residues Lys85, Gln152, Asn177, Cys181, 214–221 (WGSNMAEM), 245–249 (STYYH), 264–266 (QSD), Met374, Gln378, Asn484, 510–511 (SD), Lys533, Asp560, and 718–727 (TGRVLEHWHT) each bind Mo-bis(molybdopterin guanine dinucleotide). Residue Phe794 participates in substrate binding. Asn802 and Lys819 together coordinate Mo-bis(molybdopterin guanine dinucleotide).

It belongs to the prokaryotic molybdopterin-containing oxidoreductase family. NasA/NapA/NarB subfamily. Component of the periplasmic nitrate reductase NapAB complex composed of NapA and NapB. [4Fe-4S] cluster is required as a cofactor. It depends on Mo-bis(molybdopterin guanine dinucleotide) as a cofactor. Predicted to be exported by the Tat system. The position of the signal peptide cleavage has not been experimentally proven.

The protein localises to the periplasm. It catalyses the reaction 2 Fe(II)-[cytochrome] + nitrate + 2 H(+) = 2 Fe(III)-[cytochrome] + nitrite + H2O. Functionally, catalytic subunit of the periplasmic nitrate reductase complex NapAB. Receives electrons from NapB and catalyzes the reduction of nitrate to nitrite. This Aliivibrio fischeri (strain ATCC 700601 / ES114) (Vibrio fischeri) protein is Periplasmic nitrate reductase.